Reading from the N-terminus, the 156-residue chain is Small ribosomal subunit protein uS7 (156 aa).

It belongs to the universal ribosomal protein uS7 family. As to quaternary structure, part of the 30S ribosomal subunit. Contacts proteins S9 and S11.

Functionally, one of the primary rRNA binding proteins, it binds directly to 16S rRNA where it nucleates assembly of the head domain of the 30S subunit. Is located at the subunit interface close to the decoding center, probably blocks exit of the E-site tRNA. The chain is Small ribosomal subunit protein uS7 from Desulforudis audaxviator (strain MP104C).